Reading from the N-terminus, the 166-residue chain is Endoribonuclease YbeY (166 aa).

Residues H132, H136, and H142 each coordinate Zn(2+).

It belongs to the endoribonuclease YbeY family. Zn(2+) serves as cofactor.

Its subcellular location is the cytoplasm. Its function is as follows. Single strand-specific metallo-endoribonuclease involved in late-stage 70S ribosome quality control and in maturation of the 3' terminus of the 16S rRNA. The sequence is that of Endoribonuclease YbeY from Clostridium botulinum (strain Kyoto / Type A2).